The following is a 290-amino-acid chain: UPF0750 membrane protein YdeO (290 aa).

5 consecutive transmembrane segments (helical) span residues 18 to 38 (IIMV…VLIP), 56 to 76 (LFNL…VWLG), 83 to 103 (SFAL…SFFH), 112 to 132 (DTLL…GLAL), and 165 to 185 (LFVF…LSVI).

This sequence belongs to the UPF0750 family.

Its subcellular location is the cell membrane. The chain is UPF0750 membrane protein YdeO (ydeO) from Bacillus subtilis (strain 168).